The sequence spans 561 residues: Long-chain-fatty-acid--CoA ligase (561 aa).

213 to 224 is an ATP binding site; it reads YTGGTTGVAKGA.

The protein belongs to the ATP-dependent AMP-binding enzyme family. Mg(2+) serves as cofactor.

It localises to the membrane. The catalysed reaction is a long-chain fatty acid + ATP + CoA = a long-chain fatty acyl-CoA + AMP + diphosphate. It participates in lipid metabolism; fatty acid beta-oxidation. Functionally, catalyzes the esterification, concomitant with transport, of exogenous long-chain fatty acids into metabolically active CoA thioesters for subsequent degradation or incorporation into phospholipids. The chain is Long-chain-fatty-acid--CoA ligase (fadD) from Escherichia coli O157:H7.